A 461-amino-acid chain; its full sequence is Peptidyl-prolyl cis-trans isomerase-like 4 (461 aa).

The 171-residue stretch at 1–171 (MSVLLETSLG…KDIRIRHTVI (171 aa)) folds into the PPIase cyclophilin-type domain. In terms of domain architecture, RRM spans 248–326 (NVLFVCKLNP…HRIHVDFSQS (79 aa)). The tract at residues 372–461 (NYNMVFDKND…DDRYRDRRRR (90 aa)) is disordered. 2 stretches are compositionally biased toward basic and acidic residues: residues 378–392 (DKND…ERSY) and 400–461 (NYRD…RRRR).

This sequence belongs to the cyclophilin-type PPIase family. PPIL4 subfamily.

The protein resides in the nucleus. It catalyses the reaction [protein]-peptidylproline (omega=180) = [protein]-peptidylproline (omega=0). PPIases accelerate the folding of proteins. It catalyzes the cis-trans isomerization of proline imidic peptide bonds in oligopeptides. The polypeptide is Peptidyl-prolyl cis-trans isomerase-like 4 (cyp6) (Emericella nidulans (strain FGSC A4 / ATCC 38163 / CBS 112.46 / NRRL 194 / M139) (Aspergillus nidulans)).